The sequence spans 237 residues: MOB kinase activator 2 (237 aa).

The interval 1–21 (MDWLMGKSKAKPNGKKPAAEE) is disordered. The Zn(2+) site is built by Cys78, Cys83, His157, and His162. Residues 217–229 (GGSGDGAGSGGPG) show a composition bias toward gly residues. The interval 217-237 (GGSGDGAGSGGPGAQNHVKER) is disordered.

The protein belongs to the MOB1/phocein family. Binds STK38 and STK38L. In terms of processing, phosphorylated.

The protein resides in the nucleus. Its subcellular location is the cytoplasm. The protein localises to the perinuclear region. In terms of biological role, stimulates the autophosphorylation and kinase activity of STK38 and STK38L. The polypeptide is MOB kinase activator 2 (MOB2) (Homo sapiens (Human)).